The chain runs to 1196 residues: Nucleolar protein 6 (1196 aa).

Disordered regions lie at residues 1–75 (MPGK…VKPP) and 1140–1196 (KREQ…KALK). Over residues 22 to 31 (HAEDHSDLEH) the composition is skewed to basic and acidic residues. Residues 1165–1174 (KPKKHRKRKG) show a composition bias toward basic residues.

The protein belongs to the NRAP family. As to quaternary structure, part of the small subunit (SSU) processome, composed of more than 70 proteins and the RNA chaperone small nucleolar RNA (snoRNA) U3.

It localises to the nucleus. It is found in the nucleolus. Its subcellular location is the chromosome. Its function is as follows. Part of the small subunit (SSU) processome, first precursor of the small eukaryotic ribosomal subunit. During the assembly of the SSU processome in the nucleolus, many ribosome biogenesis factors, an RNA chaperone and ribosomal proteins associate with the nascent pre-rRNA and work in concert to generate RNA folding, modifications, rearrangements and cleavage as well as targeted degradation of pre-ribosomal RNA by the RNA exosome. This is Nucleolar protein 6 from Drosophila sechellia (Fruit fly).